A 323-amino-acid polypeptide reads, in one-letter code: Homocysteine S-methyltransferase 1 (323 aa).

Positions 3–317 (VLEDLVARAG…STIRAVSKIL (315 aa)) constitute a Hcy-binding domain. Zn(2+) contacts are provided by C235, C302, and C303.

Monomer. Zn(2+) is required as a cofactor.

The enzyme catalyses S-methyl-L-methionine + L-homocysteine = 2 L-methionine + H(+). Catalyzes methyl transfer from S-methylmethionine (SMM) to adenosyl-L-homocysteine (AdoMet). SMM degradation (by HMT-1, HMT-2, HMT-3 and HMT-4) and biosynthesis (by MMT1) constitute the SMM cycle in plants, which is probably required to achieve short term control of AdoMet level. This is Homocysteine S-methyltransferase 1 (HMT-1) from Zea mays (Maize).